The following is a 243-amino-acid chain: Ubiquinone/menaquinone biosynthesis C-methyltransferase UbiE (243 aa).

S-adenosyl-L-methionine-binding positions include Thr69, Asp90, and 116–117 (DA).

The protein belongs to the class I-like SAM-binding methyltransferase superfamily. MenG/UbiE family.

It catalyses the reaction a 2-demethylmenaquinol + S-adenosyl-L-methionine = a menaquinol + S-adenosyl-L-homocysteine + H(+). It carries out the reaction a 2-methoxy-6-(all-trans-polyprenyl)benzene-1,4-diol + S-adenosyl-L-methionine = a 5-methoxy-2-methyl-3-(all-trans-polyprenyl)benzene-1,4-diol + S-adenosyl-L-homocysteine + H(+). The protein operates within quinol/quinone metabolism; menaquinone biosynthesis; menaquinol from 1,4-dihydroxy-2-naphthoate: step 2/2. Its pathway is cofactor biosynthesis; ubiquinone biosynthesis. Functionally, methyltransferase required for the conversion of demethylmenaquinol (DMKH2) to menaquinol (MKH2) and the conversion of 2-polyprenyl-6-methoxy-1,4-benzoquinol (DDMQH2) to 2-polyprenyl-3-methyl-6-methoxy-1,4-benzoquinol (DMQH2). The protein is Ubiquinone/menaquinone biosynthesis C-methyltransferase UbiE of Ralstonia pickettii (strain 12J).